Reading from the N-terminus, the 520-residue chain is Ribonuclease Y (520 aa).

Residues 3–23 (IELAIIFIVLAAGAGFLIGNL) form a helical membrane-spanning segment. The KH domain maps to 210–273 (TVSVVALPSD…EVAKIALEKL (64 aa)). One can recognise an HD domain in the interval 336–429 (VYQHSLEVAF…VQAADALSGA (94 aa)).

The protein belongs to the RNase Y family.

It localises to the cell membrane. In terms of biological role, endoribonuclease that initiates mRNA decay. The chain is Ribonuclease Y from Geobacter sulfurreducens (strain ATCC 51573 / DSM 12127 / PCA).